Here is an 826-residue protein sequence, read N- to C-terminus: Elongator complex protein 2 (826 aa).

14 WD repeats span residues 13-53 (CCPN…VVTN), 56-100 (GHTA…LLKA), 105-152 (GHEG…VMCL), 158-200 (GNGF…FQKV), 205-246 (GHED…TSLE), 281-329 (GHEN…GVWL), 339-378 (GNTL…PREW), 386-425 (GHFD…DQSQ), 436-474 (IHGY…VENF), 565-609 (GHGY…QVQN), 612-651 (FHSL…SPEF), 667-706 (VHSR…DDCI), 712-753 (PCSS…CLYT), and 777-826 (SHTL…KCAL).

This sequence belongs to the WD repeat ELP2 family. As to quaternary structure, component of the elongator complex which consists of ELP1, ELP2, ELP3, ELP4, ELP5 and ELP6. Interacts with STAT3 and JAKs.

Its subcellular location is the cytoplasm. The protein localises to the nucleus. It functions in the pathway tRNA modification; 5-methoxycarbonylmethyl-2-thiouridine-tRNA biosynthesis. In terms of biological role, component of the elongator complex which is required for multiple tRNA modifications, including mcm5U (5-methoxycarbonylmethyl uridine), mcm5s2U (5-methoxycarbonylmethyl-2-thiouridine), and ncm5U (5-carbamoylmethyl uridine). The elongator complex catalyzes the formation of carboxymethyluridine in the wobble base at position 34 in tRNAs. In Homo sapiens (Human), this protein is Elongator complex protein 2 (ELP2).